Consider the following 127-residue polypeptide: Small ribosomal subunit protein uS11 (127 aa).

This sequence belongs to the universal ribosomal protein uS11 family. As to quaternary structure, part of the 30S ribosomal subunit. Interacts with proteins S7 and S18. Binds to IF-3.

In terms of biological role, located on the platform of the 30S subunit, it bridges several disparate RNA helices of the 16S rRNA. Forms part of the Shine-Dalgarno cleft in the 70S ribosome. This chain is Small ribosomal subunit protein uS11, found in Streptococcus agalactiae serotype Ia (strain ATCC 27591 / A909 / CDC SS700).